The primary structure comprises 790 residues: Spermatogenesis-associated protein 20 (790 aa).

The span at 1-19 (MSHHSSPPPKHKGEHKGHG) shows a compositional bias: basic residues. The disordered stretch occupies residues 1-67 (MSHHSSPPPK…PPPAPPKTVN (67 aa)). At Ser-5 the chain carries Phosphoserine. Over residues 23 to 36 (GSERGSSSRDKDRS) the composition is skewed to basic and acidic residues. The residue at position 653 (Ser-653) is a Phosphoserine.

It localises to the secreted. May play a role in fertility regulation. The sequence is that of Spermatogenesis-associated protein 20 (Spata20) from Mus musculus (Mouse).